Reading from the N-terminus, the 99-residue chain is MFAIIKTGGKQIKVEAGMEIFIEKLEGELNTEVTFEEVLMVDGKFGSPLVQGAKVTGTIVKQGKGKKIRVVRYHPKKNVNKVYGHRQPYTKVKIEKIEA.

Belongs to the bacterial ribosomal protein bL21 family. In terms of assembly, part of the 50S ribosomal subunit. Contacts protein L20.

Functionally, this protein binds to 23S rRNA in the presence of protein L20. This Mesoplasma florum (strain ATCC 33453 / NBRC 100688 / NCTC 11704 / L1) (Acholeplasma florum) protein is Large ribosomal subunit protein bL21.